Here is a 326-residue protein sequence, read N- to C-terminus: Metal-binding protein YtgA (326 aa).

The first 21 residues, 1–21 (MFFLHVRKYKHVIGGLLCLAG), serve as a signal peptide directing secretion. Fe(2+) is bound by residues His-75, His-141, His-207, and Asp-299.

This sequence belongs to the bacterial solute-binding protein 9 family. In terms of assembly, monomer.

The protein resides in the periplasm. Functionally, part of the ATP-binding cassette (ABC) transport system YtgABCD involved in metal import. Binds Fe(2+), Mn(2+) and Ni(2+), with a preference for Fe(2+) and delivers them to the membrane permease for translocation into the cytoplasm. The chain is Metal-binding protein YtgA from Chlamydia muridarum (strain MoPn / Nigg).